A 631-amino-acid polypeptide reads, in one-letter code: Shootin-1 (631 aa).

Residue Met1 is modified to N-acetylmethionine. Residues Ser3 and Ser4 each carry the phosphoserine modification. A coiled-coil region spans residues 7–353 (EKQLQLITSL…RVNQSENSVP (347 aa)). Ser101 carries the post-translational modification Phosphoserine; by PAK1. Ser249 carries the post-translational modification Phosphoserine. 2 disordered regions span residues 343–404 (KRVN…EVTD) and 417–508 (IKKG…KSMP). Residues 352-369 (VPPPPPPPPPLPPPPPNP) are compositionally biased toward pro residues. Ser375 carries the phosphoserine modification. Residues 456 to 465 (LNKSTSSRSL) are compositionally biased toward polar residues. Ser473 is subject to Phosphoserine. Thr487 is modified (phosphothreonine). Positions 490-505 (ADSSSPTGILATSESK) are enriched in polar residues. Ser494 is subject to Phosphoserine. The residue at position 496 (Thr496) is a Phosphothreonine. Ser506 and Ser515 each carry phosphoserine. The disordered stretch occupies residues 530 to 631 (FNNPCPLTPE…KTGETDSSNC (102 aa)). Thr537 carries the post-translational modification Phosphothreonine. Residues 590-602 (PQTKDQAAEKDPT) show a composition bias toward basic and acidic residues.

This sequence belongs to the shootin family. In terms of assembly, interacts with L1CAM; this interaction occurs at axonal growth cones. Interacts with actin filament retrograde flow; this interaction is enhanced in a netrin-1- and PAK1-dependent manner and promotes F-actin-substrate coupling and concomitant formation of traction forces at axonal growth cones. Interacts with RUFY3. Interacts with PFN2. Interacts (via N-terminus) with KIF20B; this interaction is direct and promotes the association of SHTN1 to microtubules in primary neurons. Associates with microtubule. In terms of processing, phosphorylated on Ser-101 and Ser-249 by PAK1 through a CDC42- and RAC1-dependent signaling pathway, which enhances its association with F-actin retrograde flow in filopodia and lamellipodia of axonal growth cones. Phosphorylation on Ser-101 and Ser-249 is increased by netrin-1. In terms of tissue distribution, expressed in hippocampal neurons.

The protein resides in the perikaryon. The protein localises to the cell projection. It is found in the axon. Its subcellular location is the growth cone. It localises to the cytoplasm. The protein resides in the cytoskeleton. The protein localises to the filopodium. It is found in the lamellipodium. Functionally, involved in the generation of internal asymmetric signals required for neuronal polarization and neurite outgrowth. Mediates netrin-1-induced F-actin-substrate coupling or 'clutch engagement' within the axon growth cone through activation of CDC42, RAC1 and PAK1-dependent signaling pathway, thereby converting the F-actin retrograde flow into traction forces, concomitantly with filopodium extension and axon outgrowth. Plays a role in cytoskeletal organization by regulating the subcellular localization of phosphoinositide 3-kinase (PI3K) activity at the axonal growth cone. Also plays a role in regenerative neurite outgrowth. In the developing cortex, cooperates with KIF20B to promote both the transition from the multipolar to the bipolar stage and the radial migration of cortical neurons from the ventricular zone toward the superficial layer of the neocortex. Involved in the accumulation of phosphatidylinositol 3,4,5-trisphosphate (PIP3) in the growth cone of primary hippocampal neurons. The protein is Shootin-1 of Mus musculus (Mouse).